The sequence spans 417 residues: UDP-N-acetylglucosamine 1-carboxyvinyltransferase (417 aa).

Residue 22–23 (KN) participates in phosphoenolpyruvate binding. Arginine 93 is a binding site for UDP-N-acetyl-alpha-D-glucosamine. Cysteine 117 acts as the Proton donor in catalysis. Position 117 is a 2-(S-cysteinyl)pyruvic acid O-phosphothioketal (cysteine 117). UDP-N-acetyl-alpha-D-glucosamine is bound by residues 122-126 (RPVDQ), aspartate 305, and isoleucine 327.

Belongs to the EPSP synthase family. MurA subfamily.

The protein resides in the cytoplasm. It catalyses the reaction phosphoenolpyruvate + UDP-N-acetyl-alpha-D-glucosamine = UDP-N-acetyl-3-O-(1-carboxyvinyl)-alpha-D-glucosamine + phosphate. It functions in the pathway cell wall biogenesis; peptidoglycan biosynthesis. Cell wall formation. Adds enolpyruvyl to UDP-N-acetylglucosamine. The sequence is that of UDP-N-acetylglucosamine 1-carboxyvinyltransferase from Chromobacterium violaceum (strain ATCC 12472 / DSM 30191 / JCM 1249 / CCUG 213 / NBRC 12614 / NCIMB 9131 / NCTC 9757 / MK).